The chain runs to 634 residues: MSGAIFGPLEGPSSLDAPSIHPLVCPLCHVQYERPCLLDCFHDFCAGCLRGRATDGRLTCPLCQHQTVLKGPSGLPPVDRLLQFLVDSSGDGVEAVRCANCDLECSEQDVETTYFCNTCGQPLCARCRDETHRARMFARHDIVALGQRSRDVPQKCTLHAEPYLLFSTDKKLLLCIRCFRDMQKESRAHCVDLESAYVQGCERLEQAVLAVKALQTATREAIALLQAMVEEVRHSAAEEEDAIHALFGSMQDRLAERKALLLQAVQSQYEEKDKAFKEQLSHLATLLPTLQVHLVICSSFLSLANKAEFLDLGYELMERLQGIVTRPHHLRPIQSSKIASDHRAEFARCLEPLLLLGPRRVAAAASGANTLAGGLGPKALTGPHCPSPVGKMSGSPVQKPTLHRSISTKVLLAEGENTPFAEHCRHYEDSYRHLQAEMQSLKDQVQELHRDLTKHHSLIKAEIMGDVLHKSLQLDVQIASEHASLEGMRVVFQEIWEEAYQRVANEQEIYEAQLHDLLQLRQENAYLTTITKQITPYVRSIAKVKERLEPRFQAPVDEQSESLQNTHDDSRNNAASARNNPGSVPEKREKTSEPKGNSWAPNGLSEEPLLKNMDHHRSKQKNGGDVPTWREHPT.

The RING-type zinc finger occupies 25 to 64 (CPLCHVQYERPCLLDCFHDFCAGCLRGRATDGRLTCPLCQ). Residues 93-145 (VEAVRCANCDLECSEQDVETTYFCNTCGQPLCARCRDETHRARMFARHDIVAL) form a B box-type; atypical zinc finger. Residues C98, C101, C127, and H132 each contribute to the Zn(2+) site. Coiled coils occupy residues 422–457 (EHCRHYEDSYRHLQAEMQSLKDQVQELHRDLTKHHS) and 494–518 (EIWEEAYQRVANEQEIYEAQLHDLL). The disordered stretch occupies residues 552-634 (FQAPVDEQSE…DVPTWREHPT (83 aa)).

In terms of assembly, interacts with the core-glycosylated, but not the fully glycosylated form of KCNH2/HERG. Interacts with DNAJA1 and HSPA8. Interacts (via the C-terminus) with HSPA1A; this interaction additively increases KCNH2 expression.

The protein localises to the cytoplasm. Its function is as follows. Plays a role in cardiac repolarization possibly by stabilizing membrane expression of the potassium channel KCNH2/HERG, or by assisting its synthesis, folding or export from the endoplasmic reticulum, in a heat shock protein-dependent manner. This chain is RING finger protein 207 (RNF207), found in Homo sapiens (Human).